A 383-amino-acid polypeptide reads, in one-letter code: 8-amino-7-oxononanoate synthase (383 aa).

Arg21 is a binding site for substrate. Gly108–Phe109 is a binding site for pyridoxal 5'-phosphate. His133 provides a ligand contact to substrate. Pyridoxal 5'-phosphate is bound by residues Ser179, His207, and Thr233. N6-(pyridoxal phosphate)lysine is present on Lys236. Residue Thr350 participates in substrate binding.

This sequence belongs to the class-II pyridoxal-phosphate-dependent aminotransferase family. BioF subfamily. As to quaternary structure, homodimer. Pyridoxal 5'-phosphate is required as a cofactor.

It carries out the reaction 6-carboxyhexanoyl-[ACP] + L-alanine + H(+) = (8S)-8-amino-7-oxononanoate + holo-[ACP] + CO2. Its pathway is cofactor biosynthesis; biotin biosynthesis. In terms of biological role, catalyzes the decarboxylative condensation of pimeloyl-[acyl-carrier protein] and L-alanine to produce 8-amino-7-oxononanoate (AON), [acyl-carrier protein], and carbon dioxide. The chain is 8-amino-7-oxononanoate synthase from Cronobacter sakazakii (strain ATCC BAA-894) (Enterobacter sakazakii).